A 637-amino-acid polypeptide reads, in one-letter code: MTSTIDKNGAAESRVFEADVAKLLQMMVHSVYSDKDVFLRELISNAADACERLRYEAISDPALLTDETRPRISITIDAERRQLAVEDNGIGMGRDELVDALGTIARSGTKAFIEQAEAAESGDGVALIGQFGVGFYSAFMVADQVDVVSRRAGAREAWRWSSDGKGTFTVTPVDESEAPARGTRVTLHLTEDATGYTDRLKIEQMIKEQSGHVPVPIALIEKPGAEPAEIADGAALWTRPRGEISASEYADFYRSVAGQFDEPALTVHFRAEGRQEFTALLFVPQTRPFDLFEPDKKRQLKLYVRRVFITEDADLLPRYLRFVRGVVDSADLPLNISREMIQESPILAAIKKSITGRILSELEKLADKDAQAYGKIWEAFGPMFKEGIYDAADRRDTVLGLSRFRTTAGSLRSLKDYVGALKENQTSIYYLAGQDAARLEASPHLEGFRARGVEVLLLSDPVDSFWVTSGPSFEGKPFKSVTQGAADLAAIPRLDAGTEPSPDVSEGVTEFLAFLKTTLSDLVSDVRSSDRLTDSPVCLVAAESGPDRQLEKILLGVGQLAGASKPVLEVNPNHPLVASLAALGQDDREFKEDAARMLLDDARVLDGDRPSDALEFSRRLIRLVERGLRRSSAGGGD.

Residues Met-1–Arg-338 form an a; substrate-binding region. Residues Glu-339–Lys-552 form a b region. A c region spans residues Ile-553 to Asp-637.

Belongs to the heat shock protein 90 family. Homodimer.

It localises to the cytoplasm. Its function is as follows. Molecular chaperone. Has ATPase activity. The sequence is that of Chaperone protein HtpG from Nitrobacter winogradskyi (strain ATCC 25391 / DSM 10237 / CIP 104748 / NCIMB 11846 / Nb-255).